The sequence spans 295 residues: Probable phosphoglycerate mutase PMU1 (295 aa).

Histidine 61 functions as the Tele-phosphohistidine intermediate in the catalytic mechanism. Glutamate 170 functions as the Proton donor/acceptor in the catalytic mechanism.

The protein belongs to the phosphoglycerate mutase family.

The protein localises to the cytoplasm. It localises to the nucleus. In terms of biological role, probable phosphomutase that may have a function related to the manipulation of phosphate groups on carbohydrates. Reduces trehalose-6-phosphate levels when overexpressed in TPS2-deleted cells. Reduces 5'-Phosphoribosyl-4-carboxamide-5-aminoimidazole (AICAR) levels, a metabolic intermediate at the crossroads between AMP and histidine biosynthesis pathways, when overexpressed in a ADE3-ADE16-ADE17 triple deletant. This is Probable phosphoglycerate mutase PMU1 from Saccharomyces cerevisiae (strain ATCC 204508 / S288c) (Baker's yeast).